Reading from the N-terminus, the 590-residue chain is Ankyrin repeat domain-containing protein 13A (590 aa).

2 ANK repeats span residues 40–69 and 73–102; these read RGRT…DVTK and QGWT…YHNT. S205 bears the Phosphoserine mark. UIM domains are found at residues 483–502, 519–538, 549–568, and 574–590; these read EDYE…SSRS, TYDA…STEG, RFDN…LEEW, and EEEA…LTDK. S586 carries the phosphoserine modification.

Interacts (via the UIM 3 and 4 repeats) with EGFR (ubiquitinated); the interaction is direct, inhibited by ANKRD13A monoubiquitination and may regulate EGFR internalization. Post-translationally, monoubiquitinated, inhibits interaction with ubiquitinated EGFR.

It is found in the cell membrane. The protein localises to the late endosome. Ubiquitin-binding protein that specifically recognizes and binds 'Lys-63'-linked ubiquitin. Does not bind 'Lys-48'-linked ubiquitin. Positively regulates the internalization of ligand-activated EGFR by binding to the Ub moiety of ubiquitinated EGFR at the cell membrane. This is Ankyrin repeat domain-containing protein 13A (ANKRD13A) from Homo sapiens (Human).